A 463-amino-acid polypeptide reads, in one-letter code: ATP synthase subunit beta (463 aa).

Gly151–Thr158 contacts ATP.

This sequence belongs to the ATPase alpha/beta chains family. In terms of assembly, F-type ATPases have 2 components, CF(1) - the catalytic core - and CF(0) - the membrane proton channel. CF(1) has five subunits: alpha(3), beta(3), gamma(1), delta(1), epsilon(1). CF(0) has three main subunits: a(1), b(2) and c(9-12). The alpha and beta chains form an alternating ring which encloses part of the gamma chain. CF(1) is attached to CF(0) by a central stalk formed by the gamma and epsilon chains, while a peripheral stalk is formed by the delta and b chains.

It is found in the cell membrane. It carries out the reaction ATP + H2O + 4 H(+)(in) = ADP + phosphate + 5 H(+)(out). Produces ATP from ADP in the presence of a proton gradient across the membrane. The catalytic sites are hosted primarily by the beta subunits. This Clostridium botulinum (strain Loch Maree / Type A3) protein is ATP synthase subunit beta.